A 938-amino-acid chain; its full sequence is Isoleucine--tRNA ligase (938 aa).

The 'HIGH' region signature appears at Pro-58–His-68. Glu-566 lines the L-isoleucyl-5'-AMP pocket. The 'KMSKS' region signature appears at Lys-607–Ser-611. Residue Lys-610 participates in ATP binding. Positions 906, 909, 926, and 929 each coordinate Zn(2+).

The protein belongs to the class-I aminoacyl-tRNA synthetase family. IleS type 1 subfamily. In terms of assembly, monomer. It depends on Zn(2+) as a cofactor.

Its subcellular location is the cytoplasm. The catalysed reaction is tRNA(Ile) + L-isoleucine + ATP = L-isoleucyl-tRNA(Ile) + AMP + diphosphate. In terms of biological role, catalyzes the attachment of isoleucine to tRNA(Ile). As IleRS can inadvertently accommodate and process structurally similar amino acids such as valine, to avoid such errors it has two additional distinct tRNA(Ile)-dependent editing activities. One activity is designated as 'pretransfer' editing and involves the hydrolysis of activated Val-AMP. The other activity is designated 'posttransfer' editing and involves deacylation of mischarged Val-tRNA(Ile). This chain is Isoleucine--tRNA ligase, found in Nitratidesulfovibrio vulgaris (strain DP4) (Desulfovibrio vulgaris).